Here is a 252-residue protein sequence, read N- to C-terminus: Small ribosomal subunit protein uS2 (252 aa).

The interval 231 to 252 is disordered; it reads SVESTAQEQVEETAQEETAVEA. Over residues 239–252 the composition is skewed to acidic residues; sequence QVEETAQEETAVEA.

Belongs to the universal ribosomal protein uS2 family.

The polypeptide is Small ribosomal subunit protein uS2 (Acetivibrio thermocellus (strain ATCC 27405 / DSM 1237 / JCM 9322 / NBRC 103400 / NCIMB 10682 / NRRL B-4536 / VPI 7372) (Clostridium thermocellum)).